The primary structure comprises 491 residues: Ribulose-1,5 bisphosphate carboxylase/oxygenase large subunit N-methyltransferase, chloroplastic (491 aa).

An SET domain is found at 67–291 (EGVVTTKTPV…AGDQLFIQYD (225 aa)).

The protein belongs to the class V-like SAM-binding methyltransferase superfamily. Plant protein-lysine LSMT methyltransferase family.

The protein localises to the plastid. It is found in the chloroplast. The catalysed reaction is L-lysyl-[ribulose-1,5-bisphosphate carboxylase] + 3 S-adenosyl-L-methionine = N(6),N(6),N(6)-trimethyl-L-lysyl-[ribulose-1,5-bisphosphate carboxylase] + 3 S-adenosyl-L-homocysteine + 3 H(+). Its function is as follows. Methylates 'Lys-14' of the large subunit of RuBisCO. This Nicotiana tabacum (Common tobacco) protein is Ribulose-1,5 bisphosphate carboxylase/oxygenase large subunit N-methyltransferase, chloroplastic (RBCMT).